The sequence spans 140 residues: ATP synthase epsilon chain (140 aa).

The protein belongs to the ATPase epsilon chain family. As to quaternary structure, F-type ATPases have 2 components, CF(1) - the catalytic core - and CF(0) - the membrane proton channel. CF(1) has five subunits: alpha(3), beta(3), gamma(1), delta(1), epsilon(1). CF(0) has three main subunits: a, b and c.

The protein localises to the cell inner membrane. Functionally, produces ATP from ADP in the presence of a proton gradient across the membrane. This is ATP synthase epsilon chain from Xylella fastidiosa (strain Temecula1 / ATCC 700964).